Consider the following 360-residue polypeptide: Peptide chain release factor 1 (360 aa).

Q235 carries the post-translational modification N5-methylglutamine. Residues 285 to 295 (AQQASEASTRK) show a composition bias toward polar residues. Residues 285 to 305 (AQQASEASTRKSLIGSGDRSD) are disordered.

The protein belongs to the prokaryotic/mitochondrial release factor family. Post-translationally, methylated by PrmC. Methylation increases the termination efficiency of RF1.

It localises to the cytoplasm. Its function is as follows. Peptide chain release factor 1 directs the termination of translation in response to the peptide chain termination codons UAG and UAA. The protein is Peptide chain release factor 1 of Thiobacillus denitrificans (strain ATCC 25259 / T1).